The following is a 152-amino-acid chain: MKGGKSKTESKRADPKLAVNKKGAATKARKPAGKGKAAKDPNKPKRPPSAFFVFMEEFRKVFNKEHPENKAVSAVGKAAGAKWKTMSDAEKAPYVAKSEKRKVEYEKNMRAYNKKQAEGPTGGDEEESEKSVSEVNDEDDDEEGSGEEEDDD.

Residues 1-15 (MKGGKSKTESKRADP) show a composition bias toward basic and acidic residues. Disordered regions lie at residues 1-48 (MKGG…KRPP) and 74-152 (AVGK…EDDD). Positions 44 to 113 (PKRPPSAFFV…EYEKNMRAYN (70 aa)) form a DNA-binding region, HMG box. Residues 74–84 (AVGKAAGAKWK) are compositionally biased toward low complexity. Residues 85–109 (TMSDAEKAPYVAKSEKRKVEYEKNM) are compositionally biased toward basic and acidic residues. Acidic residues predominate over residues 135–152 (VNDEDDDEEGSGEEEDDD).

It belongs to the HMGB family.

The protein localises to the nucleus. The polypeptide is HMG1/2-like protein (Glycine max (Soybean)).